The chain runs to 201 residues: MEKFTKLTGIAAPMPLVNIDTDMIIPKQFLKTIKRSGLGVNLFDEMRYDRQGNENPDFVLNKPQYRDAQILVTGENFGCGSSREHAPWALLDFGIRCVIAPSFADIFYNNCFKNGILPIALPQEEVDKLMDDAARGANATVTVDLENQTISGPDGGTISFEVDAFKKHCLLNGLDDIGLSLEKVASIDAFEAQASAARPWV.

It belongs to the LeuD family. LeuD type 1 subfamily. As to quaternary structure, heterodimer of LeuC and LeuD.

It carries out the reaction (2R,3S)-3-isopropylmalate = (2S)-2-isopropylmalate. Its pathway is amino-acid biosynthesis; L-leucine biosynthesis; L-leucine from 3-methyl-2-oxobutanoate: step 2/4. In terms of biological role, catalyzes the isomerization between 2-isopropylmalate and 3-isopropylmalate, via the formation of 2-isopropylmaleate. This is 3-isopropylmalate dehydratase small subunit from Dinoroseobacter shibae (strain DSM 16493 / NCIMB 14021 / DFL 12).